The chain runs to 1173 residues: MASSSSSERWIDGLQFSSLLWPPPRDPQQHKDQVVAYVEYFGQFTSEQFPDDIAELVRHQYPSTEKRLLDDVLAMFVLHHPEHGHAVILPIISCLIDGSLVYSKEAHPFASFISLVCPSSENDYSEQWALACGEILRILTHYNRPIYKTEQQNGDTERNCLSKATTSGSPTSEPKAGSPTQHERKPLRPLSPWISDILLAAPLGIRSDYFRWCSGVMGKYAAGELKPPTIASRGSGKHPQLMPSTPRWAVANGAGVILSVCDDEVARYETATLTAVAVPALLLPPPTTSLDEHLVAGLPALEPYARLFHRYYAIATPSATQRLLLGLLEAPPSWAPDALDAAVQLVELLRAAEDYASGVRLPRNWMHLHFLRAIGIAMSMRAGVAADAAAALLFRILSQPALLFPPLSQVEGVEIQHAPIGGYSSNYRKQIEVPAAEATIEATAQGIASMLCAHGPEVEWRICTIWEAAYGLIPLNSSAVDLPEIIVATPLQPPILSWNLYIPLLKVLEYLPRGSPSEACLMKIFVATVETILSRTFPPESSRELTRKARSSFTTRSATKNLAMSELRAMVHALFLESCAGVELASRLLFVVLTVCVSHEAQSSGSKRPRSEYASTTENIEANQPVSNNQTANRKSRNVKGQGPVAAFDSYVLAAVCALACEVQLYPMISGGGNFSNSAVAGTITKPVKINGSSKEYGAGIDSAISHTRRILAILEALFSLKPSSVGTPWSYSSSEIVAAAMVAAHISELFRRSKALTHALSGLMRCKWDKEIHKRASSLYNLIDVHSKVVASIVDKAEPLEAYLKNTPVQKDSVTCLNWKQENTCASTTCFDTAVTSASRTEMNPRGNHKYARHSDEGSGRPSEKGIKDFLLDASDLANFLTADRLAGFYCGTQKLLRSVLAEKPELSFSVVSLLWHKLIAAPEIQPTAESTSAQQGWRQVVDALCNVVSATPAKAAAAVVLQAERELQPWIAKDDEEGQKMWKINQRIVKVLVELMRNHDRPESLVILASASDLLLRATDGMLVDGEACTLPQLELLEATARAIQPVLAWGPSGLAVVDGLSNLLKCRLPATIRCLSHPSAHVRALSTSVLRDIMNQSSIPIKVTPKLPTTEKNGMNSPSYRFFNAASIDWKADIQNCLNWEAHSLLSTTMPTQFLDTAARELGCTISLSQ.

Disordered stretches follow at residues 150 to 187 (EQQN…RKPL), 604 to 641 (SGSK…NVKG), and 840 to 863 (SRTE…SGRP). 2 stretches are compositionally biased toward polar residues: residues 162–172 (SKATTSGSPTS) and 613–633 (YAST…QTAN). The span at 854–863 (RHSDEGSGRP) shows a compositional bias: basic and acidic residues.

This sequence belongs to the GIGANTEA family. As to quaternary structure, interacts with SPY. Interacts with ADO1 (via N-terminus) and ADO2. Interacts with ADO3 (via N-terminus). Interacts (via N-terminus) with CDF1. Interacts (via N-terminus) with TCP4. Widely expressed with highest levels in inflorescence apices, young flowers and young siliques.

The protein localises to the nucleus. Its subcellular location is the cytoplasm. In terms of biological role, involved in regulation of circadian rhythm and photoperiodic flowering. May play a role in maintenance of circadian amplitude and period length. Is involved in phytochrome B signaling. Stabilizes ADO3 and the circadian photoreceptor ADO1/ZTL. Regulates 'CONSTANS' (CO) in the long-day flowering pathway by modulating the ADO3-dependent protein stability of CDF1 and CDF2, but is not essential to activate CO transcription. Regulates, via the microRNA miR172, a CO-independent pathway that promotes photoperiodic flowering by inducing 'FLOWERING LOCUS T'. This Arabidopsis thaliana (Mouse-ear cress) protein is Protein GIGANTEA (GI).